A 513-amino-acid polypeptide reads, in one-letter code: ATP synthase subunit alpha (513 aa).

ATP is bound at residue 169 to 176 (GDRQCGKT).

The protein belongs to the ATPase alpha/beta chains family. F-type ATPases have 2 components, CF(1) - the catalytic core - and CF(0) - the membrane proton channel. CF(1) has five subunits: alpha(3), beta(3), gamma(1), delta(1), epsilon(1). CF(0) has three main subunits: a(1), b(2) and c(9-12). The alpha and beta chains form an alternating ring which encloses part of the gamma chain. CF(1) is attached to CF(0) by a central stalk formed by the gamma and epsilon chains, while a peripheral stalk is formed by the delta and b chains.

The protein localises to the cell inner membrane. It carries out the reaction ATP + H2O + 4 H(+)(in) = ADP + phosphate + 5 H(+)(out). Produces ATP from ADP in the presence of a proton gradient across the membrane. The alpha chain is a regulatory subunit. This is ATP synthase subunit alpha from Burkholderia cenocepacia (strain ATCC BAA-245 / DSM 16553 / LMG 16656 / NCTC 13227 / J2315 / CF5610) (Burkholderia cepacia (strain J2315)).